The following is a 367-amino-acid chain: Glycolate oxidase 1 (367 aa).

Met-1 is modified (N-acetylmethionine). Tyr-24 contacts glyoxylate. FMN contacts are provided by residues 77–79 (PTA), Ser-106, 127–129 (QLY), and Thr-155. Residue Tyr-129 coordinates glyoxylate. Residue Arg-164 participates in glyoxylate binding. FMN is bound by residues Lys-230 and Ser-252. Residues His-254 and Arg-257 each contribute to the glyoxylate site. The Proton acceptor role is filled by His-254. Residues 285–289 (DGGVR) and 308–309 (GR) each bind FMN.

The protein belongs to the FMN-dependent alpha-hydroxy acid dehydrogenase family. As to quaternary structure, homotetramer. It depends on FMN as a cofactor.

The protein localises to the peroxisome. The enzyme catalyses glycolate + O2 = glyoxylate + H2O2. It participates in photosynthesis; photorespiration; glycine from 2-phosphoglycolate: step 2/3. Catalyzes the oxidation of glycolate to glyoxylate, with a reduction of O2 to H2O2. Is a key enzyme in photorespiration in green plants. This is Glycolate oxidase 1 (GLO1) from Arabidopsis thaliana (Mouse-ear cress).